The chain runs to 257 residues: Large ribosomal subunit protein uL2 (257 aa).

Positions 207–231 (VEHPFGGGNHQHIGKPSTIRRDAPA) are disordered.

This sequence belongs to the universal ribosomal protein uL2 family. Component of the large ribosomal subunit.

Its subcellular location is the cytoplasm. In terms of biological role, component of the large ribosomal subunit. The ribosome is a large ribonucleoprotein complex responsible for the synthesis of proteins in the cell. In Xenopus tropicalis (Western clawed frog), this protein is Large ribosomal subunit protein uL2 (rpl8).